Reading from the N-terminus, the 123-residue chain is UPF0102 protein SPO0400 (123 aa).

This sequence belongs to the UPF0102 family.

This is UPF0102 protein SPO0400 from Ruegeria pomeroyi (strain ATCC 700808 / DSM 15171 / DSS-3) (Silicibacter pomeroyi).